A 365-amino-acid polypeptide reads, in one-letter code: NADH-quinone oxidoreductase subunit D (365 aa).

This sequence belongs to the complex I 49 kDa subunit family. NDH-1 is composed of 14 different subunits. Subunits NuoB, C, D, E, F, and G constitute the peripheral sector of the complex.

It localises to the cell membrane. The enzyme catalyses a quinone + NADH + 5 H(+)(in) = a quinol + NAD(+) + 4 H(+)(out). In terms of biological role, NDH-1 shuttles electrons from NADH, via FMN and iron-sulfur (Fe-S) centers, to quinones in the respiratory chain. The immediate electron acceptor for the enzyme in this species is believed to be a menaquinone. Couples the redox reaction to proton translocation (for every two electrons transferred, four hydrogen ions are translocated across the cytoplasmic membrane), and thus conserves the redox energy in a proton gradient. This Carboxydothermus hydrogenoformans (strain ATCC BAA-161 / DSM 6008 / Z-2901) protein is NADH-quinone oxidoreductase subunit D.